We begin with the raw amino-acid sequence, 236 residues long: Small ribosomal subunit protein eS6 (236 aa).

2 positions are modified to phosphoserine: S232 and S233.

The protein belongs to the eukaryotic ribosomal protein eS6 family. Post-translationally, phosphorylated.

The protein is Small ribosomal subunit protein eS6 (RPS6A) of Candida glabrata (strain ATCC 2001 / BCRC 20586 / JCM 3761 / NBRC 0622 / NRRL Y-65 / CBS 138) (Yeast).